The chain runs to 104 residues: Large ribosomal subunit protein bL21 (104 aa).

It belongs to the bacterial ribosomal protein bL21 family. Part of the 50S ribosomal subunit. Contacts protein L20.

Functionally, this protein binds to 23S rRNA in the presence of protein L20. This is Large ribosomal subunit protein bL21 from Helicobacter pylori (strain J99 / ATCC 700824) (Campylobacter pylori J99).